A 292-amino-acid polypeptide reads, in one-letter code: UTP--glucose-1-phosphate uridylyltransferase (292 aa).

It belongs to the UDPGP type 2 family.

It carries out the reaction alpha-D-glucose 1-phosphate + UTP + H(+) = UDP-alpha-D-glucose + diphosphate. In terms of biological role, may play a role in stationary phase survival. This Mycoplasma genitalium (strain ATCC 33530 / DSM 19775 / NCTC 10195 / G37) (Mycoplasmoides genitalium) protein is UTP--glucose-1-phosphate uridylyltransferase (galU).